We begin with the raw amino-acid sequence, 264 residues long: Small ribosomal subunit protein eS1 (264 aa).

The tract at residues 233-264 (GEGGGAGKPSGDEAGAKVERADGYEPPVQESV) is disordered. Over residues 242 to 255 (SGDEAGAKVERADG) the composition is skewed to basic and acidic residues.

It belongs to the eukaryotic ribosomal protein eS1 family. As to quaternary structure, component of the small ribosomal subunit. Mature ribosomes consist of a small (40S) and a large (60S) subunit. The 40S subunit contains about 33 different proteins and 1 molecule of RNA (18S). The 60S subunit contains about 49 different proteins and 3 molecules of RNA (25S, 5.8S and 5S).

The protein resides in the cytoplasm. The protein is Small ribosomal subunit protein eS1 of Eimeria tenella (Coccidian parasite).